Consider the following 603-residue polypeptide: Mitochondrial distribution and morphology protein 34 (603 aa).

The 205-residue stretch at 1-205 folds into the SMP-LTD domain; it reads MAFNFNWSPL…SPEYQEIETE (205 aa). The segment covering 320–332 has biased composition (low complexity); it reads KSGASSVASGSTG. Disordered regions lie at residues 320–511 and 558–603; these read KSGA…PLLR and IARK…AYVA. A compositionally biased stretch (polar residues) spans 333 to 351; that stretch reads NETLSSRPTLASSYSTSAG. The segment covering 371-380 has biased composition (basic and acidic residues); the sequence is VVDLRRKDGA. The span at 383–403 shows a compositional bias: polar residues; the sequence is GVSTEANTPLPSTQVSDTSSV. Residues 452–463 show a composition bias toward low complexity; that stretch reads PLLAPAPLIPNA. The span at 500-509 shows a compositional bias: polar residues; that stretch reads RQAQQSTSPL. Positions 558 to 570 are enriched in basic and acidic residues; sequence IARKVQEEKDKSS.

The protein belongs to the MDM34 family. As to quaternary structure, component of the ER-mitochondria encounter structure (ERMES) or MDM complex, composed of mmm1, mdm10, mdm12 and mdm34.

The protein resides in the mitochondrion outer membrane. Functionally, component of the ERMES/MDM complex, which serves as a molecular tether to connect the endoplasmic reticulum (ER) and mitochondria. Components of this complex are involved in the control of mitochondrial shape and protein biogenesis, and function in nonvesicular lipid trafficking between the ER and mitochondria. Mdm34 is required for the interaction of the ER-resident membrane protein mmm1 and the outer mitochondrial membrane-resident beta-barrel protein mdm10. This Pyrenophora tritici-repentis (strain Pt-1C-BFP) (Wheat tan spot fungus) protein is Mitochondrial distribution and morphology protein 34.